Consider the following 353-residue polypeptide: uncharacterized protein (353 aa).

9 helical membrane passes run 16-36 (AAYI…ISCG), 77-97 (VVLA…FQGL), 106-128 (YTLG…GLHL), 140-160 (SVAA…LVHA), 167-187 (LILT…LIIA), 208-228 (GWSY…LLII), 263-283 (LLTG…LVIP), 296-316 (HLLP…DLLS), and 323-343 (IELP…ALIL).

Belongs to the binding-protein-dependent transport system permease family. FecCD subfamily. In terms of assembly, the complex is composed of two ATP-binding proteins (YvrA), two transmembrane proteins (YvrB) and a solute-binding protein (YvrC).

The protein resides in the cell membrane. In terms of biological role, probably part of an ABC transporter complex. Probably responsible for the translocation of the substrate across the membrane. This is an uncharacterized protein from Bacillus subtilis (strain 168).